The following is a 1450-amino-acid chain: MFSFVDNRLLVLLAACVLLVRALDQEDIESGLCHQEGTTYSDKDVWKPEPCVICVCDNGNIMCDDVTCGDYPVDCPNAEIPFGECCPVCPDGDGTSYSEQTGVEGPKGEVGPKGDRGLPGPPGRDGNPGLPGPPGPPGPPGLGGNFAPQMSYGYDEKSAGISVPGPMGPMGPRGPPGPSGSPGPQGFQGPSGEPGEPGAAGALGPRGLPGPPGKNGDDGESGKPGRPGERGPSGPQGARGLPGTAGLPGMKGHRGFNGLDGAKGDNGPAGPKGEPGNPGENGAPGQAGPRGLPGERGRPGAPGPAGARGNDGSPGAAGPPGPTGPTGPPGFPGAVGAKGDAGPQGSRGSEGPQGARGEPGAPGPAGAAGPSGNPGTDGQPGGKGATGSPGIAGAPGFPGARGAPGPQGPAGAPGPKGNNGEPGAQGNKGEPGAKGEPGPAGVQGPPGPSGEEGKRGSRGEPGPAGPPGPAGERGGPGSRGFPGSDGASGPKGAPGERGSVGPAGPKGSTGESGRPGEPGLPGAKGLTGSPGSPGPDGKTGPAGAAGQDGHPGPPGPSGARGQSGVMGFPGPKGAAGEPGKSGERGVAGPPGATGAPGKDGEAGAQGPPGPSGPSGERGEQGPAGSPGFQGLPGSPGPAGEAGKPGEQGAPGDAGGPGPSGPRGERGFPGERGGQGPAGAQGPRGSPGSPGNDGAKGEAGAAGAPGGRGPPGLQGMPGERGSAGMPGAKGDRGDAGTKGADGAPGKDGARGLTGPIGPPGPSGAPGDKGEGGPSGPAGPTGARGSPGERGEPGAPGPAGICGPPGADGQPGAKGESGDAGPKGDAGAPGPAGPTGAPGPAGNVGAPGPKGTRGAAGPPGATGFPGAAGRLGPPGPSGNAGPPGPPGPGGKEGAKGSRGETGPAGRSGEPGPAGPPGPSGEKGSPGSDGPAGAPGIPGPQGIAGQRGVVGLPGQRGERGFSGLPGPAGEPGKQGPSGPNGERGPPGPSGPPGLGGPPGEPGREGSPGSEGAPGRDGSPGPKGDRGENGPSGPPGAPGAPGAPGPVGPAGKNGDRGETGPAGPAGPAGPSGVRGAPGPAGARGDKGEAGEQGERGMKGHRGFNGMQGPPGPPGSSGEQGAPGPSGPAGPRGPPGSSGSTGKDGVNGLPGPIGPPGPRGRNGDVGPAGPPGPPGPPGPPGPPSGGFDFSFMPQPPEPKSHGDGRYFRADDANVVRDRDLEVDTTLKSLSAQIENIRSPEGTRKNPARTCRDLKMCHSDWKSGDYWIDPNQGCNLDAIKVHCNMETGETCVYPSQASISQKNWYTSKNPREKKHVWFGETMSDGFQFEYGGEGSDPADVNIQLTFLRLMATEASQNITYHCKNSVAYMDQETGNLKKAVLLQGSNEIEIRAEGNSRFTYGVTEDGCTQHTGEWGKTVIEYKTTKTSRLPIIDIAPMDVGTPDQEFGIDIGPVCFL.

Residues 1 to 22 (MFSFVDNRLLVLLAACVLLVRA) form the signal peptide. A propeptide spans 23-148 (LDQEDIESGL…PPGLGGNFAP (126 aa)) (N-terminal propeptide). Positions 31 to 90 (GLCHQEGTTYSDKDVWKPEPCVICVCDNGNIMCDDVTCGDYPVDCPNAEIPFGECCPVCP) constitute a VWFC domain. The interval 97–1201 (YSEQTGVEGP…EPKSHGDGRY (1105 aa)) is disordered. Positions 106–116 (PKGEVGPKGDR) are enriched in basic and acidic residues. Residues 130–140 (LPGPPGPPGPP) are compositionally biased toward pro residues. Residue Q149 is modified to Pyrrolidone carboxylic acid. An Allysine modification is found at K157. A compositionally biased stretch (pro residues) spans 166–181 (PMGPMGPRGPPGPSGS). 4-hydroxyproline occurs at positions 176, 182, 194, 197, 212, 227, 242, and 248. Over residues 182–206 (PGPQGFQGPSGEPGEPGAAGALGPR) the composition is skewed to low complexity. The segment covering 215 to 229 (NGDDGESGKPGRPGE) has biased composition (basic and acidic residues). K251 bears the 5-hydroxylysine; alternate mark. K251 carries an O-linked (Gal...) hydroxylysine; alternate glycan. The segment covering 266–292 (NGPAGPKGEPGNPGENGAPGQAGPRGL) has biased composition (low complexity). A 4-hydroxyproline mark is found at P275, P278, P284, P293, P299, P314, P320, P329, P332, P359, P362, P374, P380, P389, P395, P398, and P413. Over residues 317–331 (AGPPGPTGPTGPPGF) the composition is skewed to pro residues. The span at 352 to 374 (PQGARGEPGAPGPAGAAGPSGNP) shows a compositional bias: low complexity. Positions 378 to 387 (GQPGGKGATG) are enriched in gly residues. Positions 388 to 443 (SPGIAGAPGFPGARGAPGPQGPAGAPGPKGNNGEPGAQGNKGEPGAKGEPGPAGVQ) are enriched in low complexity. Position 416 is a 5-hydroxylysine (K416). P422, P437, P446, P461, P467, P476, and P482 each carry 4-hydroxyproline. A compositionally biased stretch (gly residues) spans 471 to 480 (GERGGPGSRG). A 5-hydroxylysine modification is found at K491. 4-hydroxyproline is present on residues P494, P515, P521, P530, P533, P551, P569, P578, P590, P608, P626, P632, P644, P650, P656, and P668. Low complexity-rich tracts occupy residues 568–578 (FPGPKGAAGEP) and 586–596 (VAGPPGATGAP). Over residues 637-650 (PAGEAGKPGEQGAP) the composition is skewed to low complexity. Residues 669-678 (GERGGQGPAG) are compositionally biased toward gly residues. Over residues 679–701 (AQGPRGSPGSPGNDGAKGEAGAA) the composition is skewed to low complexity. 4-hydroxyproline is present on residues P689, P704, P710, P716, and P725. The span at 702-711 (GAPGGRGPPG) shows a compositional bias: gly residues. A 5-hydroxylysine modification is found at K737. 4-hydroxyproline is present on residues P743, P758, P764, P785, P791, P794, P803, P809, P827, P836, and P845. A compositionally biased stretch (low complexity) spans 796–806 (PAGICGPPGAD). The span at 817-869 (DAGPKGDAGAPGPAGPTGAPGPAGNVGAPGPKGTRGAAGPPGATGFPGAAGRL) shows a compositional bias: low complexity. The residue at position 848 (K848) is a 5-hydroxylysine. 2 positions are modified to 4-hydroxyproline: P857 and P863. Position 871 is a 3-hydroxyproline (P871). 4-hydroxyproline is present on residues P872, P881, P884, P908, P914, P923, P932, P950, P962, P968, P983, P989, P995, P1004, and P1010. Residues 917 to 943 (SGEKGSPGSDGPAGAPGIPGPQGIAGQ) are compositionally biased toward low complexity. Residues 982–997 (PPGPSGPPGLGGPPGE) are compositionally biased toward pro residues. Position 1019 is a 5-hydroxylysine (K1019). Over residues 1028-1043 (SGPPGAPGAPGAPGPV) the composition is skewed to pro residues. P1031, P1034, and P1037 each carry 4-hydroxyproline. Low complexity predominate over residues 1064–1078 (AGPSGVRGAPGPAGA). Residues 1079 to 1093 (RGDKGEAGEQGERGM) show a composition bias toward basic and acidic residues. The residue at position 1082 (K1082) is a 5-hydroxylysine. K1094 is modified (5-hydroxylysine; alternate). K1094 carries O-linked (Gal...) hydroxylysine; alternate glycosylation. P1106 and P1109 each carry 4-hydroxyproline. The span at 1120-1129 (PSGPAGPRGP) shows a compositional bias: pro residues. 4-hydroxyproline is present on residues P1130 and P1145. Low complexity predominate over residues 1130–1145 (PGSSGSTGKDGVNGLP). P1150 is subject to 3-hydroxyproline. P1151 bears the 4-hydroxyproline mark. Residues 1163-1178 (AGPPGPPGPPGPPGPP) are compositionally biased toward pro residues. Position 1165 is a 3-hydroxyproline (P1165). P1166 bears the 4-hydroxyproline mark. P1168 carries the post-translational modification 3-hydroxyproline. Position 1169 is a 4-hydroxyproline (P1169). Residue P1171 is modified to 3-hydroxyproline. Residues P1172, P1175, and P1178 each carry the 4-hydroxyproline modification. K1194 is subject to Allysine. Residues 1205–1450 (DDANVVRDRD…GIDIGPVCFL (246 aa)) constitute a propeptide, C-terminal propeptide. The region spanning 1215–1450 (LEVDTTLKSL…GIDIGPVCFL (236 aa)) is the Fibrillar collagen NC1 domain. Cystine bridges form between C1245-C1277, C1285-C1448, and C1356-C1401. D1263, N1265, Q1266, C1268, and D1271 together coordinate Ca(2+). A glycan (N-linked (GlcNAc...) asparagine) is linked at N1351.

The protein belongs to the fibrillar collagen family. Trimers of one alpha 2(I) and two alpha 1(I) chains. In terms of processing, contains mostly 4-hydroxyproline. Proline residues at the third position of the tripeptide repeating unit (G-X-Y) are hydroxylated in some or all of the chains. Contains 3-hydroxyproline at a few sites. This modification occurs on the first proline residue in the sequence motif Gly-Pro-Hyp, where Hyp is 4-hydroxyproline. Post-translationally, lysine residues at the third position of the tripeptide repeating unit (G-X-Y) are 5-hydroxylated in some or all of the chains. In terms of processing, O-glycosylated on hydroxylated lysine residues. The O-linked glycan consists of a Glc-Gal disaccharide.

Its subcellular location is the secreted. It is found in the extracellular space. The protein resides in the extracellular matrix. Its function is as follows. Type I collagen is a member of group I collagen (fibrillar forming collagen). This is Collagen alpha-1(I) chain (COL1A1) from Cynops pyrrhogaster (Japanese fire-bellied newt).